The primary structure comprises 411 residues: Fructose-1,6-bisphosphatase, chloroplastic (411 aa).

The N-terminal 53 residues, 1-53, are a transit peptide targeting the chloroplast; sequence MAATAGATPSSHLLLSSSRHVAASPQPRILFPSLSGKRVAVGKNHHATGVRCM. E133, E162, D183, L185, and D186 together coordinate Mg(2+). 186–189 serves as a coordination point for substrate; that stretch reads DGSS. C227 and C232 form a disulfide bridge. 5 residues coordinate substrate: N291, Y323, Y341, Y343, and K353. E359 contributes to the Mg(2+) binding site.

The protein belongs to the FBPase class 1 family. As to quaternary structure, homotetramer. It depends on Mg(2+) as a cofactor.

The protein resides in the plastid. It is found in the chloroplast stroma. It carries out the reaction beta-D-fructose 1,6-bisphosphate + H2O = beta-D-fructose 6-phosphate + phosphate. It functions in the pathway carbohydrate biosynthesis; Calvin cycle. This Brassica napus (Rape) protein is Fructose-1,6-bisphosphatase, chloroplastic (FBP).